The following is a 370-amino-acid chain: 3-isopropylmalate dehydrogenase (370 aa).

Residue 77-90 coordinates NAD(+); it reads GPKWDGVPYEHRPE. Substrate-binding residues include arginine 97, arginine 107, arginine 135, and aspartate 226. Mg(2+) is bound by residues aspartate 226, aspartate 250, and aspartate 254. An NAD(+)-binding site is contributed by 290–302; the sequence is GSAPDIAGKSIAN.

It belongs to the isocitrate and isopropylmalate dehydrogenases family. LeuB type 1 subfamily. In terms of assembly, homodimer. Mg(2+) is required as a cofactor. Mn(2+) serves as cofactor.

The protein resides in the cytoplasm. The catalysed reaction is (2R,3S)-3-isopropylmalate + NAD(+) = 4-methyl-2-oxopentanoate + CO2 + NADH. It functions in the pathway amino-acid biosynthesis; L-leucine biosynthesis; L-leucine from 3-methyl-2-oxobutanoate: step 3/4. Its function is as follows. Catalyzes the oxidation of 3-carboxy-2-hydroxy-4-methylpentanoate (3-isopropylmalate) to 3-carboxy-4-methyl-2-oxopentanoate. The product decarboxylates to 4-methyl-2 oxopentanoate. The polypeptide is 3-isopropylmalate dehydrogenase (leuB) (Agrobacterium fabrum (strain C58 / ATCC 33970) (Agrobacterium tumefaciens (strain C58))).